The primary structure comprises 1124 residues: Probable leucine-rich repeat receptor-like protein kinase At2g33170 (1124 aa).

An N-terminal signal peptide occupies residues 1–32 (MGWWIFEFKKESKSMFVGVLFLLTLLVWTSES). Residues 33–752 (LNSDGQFLLE…LKAGSARRGR (720 aa)) are Extracellular-facing. Residues N72, N96, and N131 are each glycosylated (N-linked (GlcNAc...) asparagine). 26 LRR repeats span residues 86 to 109 (VVTSLDLSSMNLSGIVSPSIGGLV), 110 to 132 (NLVYLNLAYNALTGDIPREIGNC), 134 to 156 (KLEVMFLNNNQFGGSIPVEINKL), 158 to 180 (QLRSFNICNNKLSGPLPEEIGDL), 182 to 205 (NLEELVAYTNNLTGPLPRSLGNLN), 206 to 228 (KLTTFRAGQNDFSGNIPTEIGKC), 230 to 252 (NLKLLGLAQNFISGELPKEIGML), 254 to 277 (KLQEVILWQNKFSGFIPKDIGNLT), 278 to 300 (SLETLALYGNSLVGPIPSEIGNM), 302 to 325 (SLKKLYLYQNQLNGTIPKELGKLS), 326 to 348 (KVMEIDFSENLLSGEIPVELSKI), 350 to 371 (ELRLLYLFQNKLTGIIPNELSK), 374 to 397 (NLAKLDLSINSLTGPIPPGFQNLT), 398 to 420 (SMRQLQLFHNSLSGVIPQGLGLY), 422 to 444 (PLWVVDFSENQLSGKIPPFICQQ), 446 to 468 (NLILLNLGSNRIFGNIPPGVLRC), 470 to 491 (SLLQLRVVGNRLTGQFPTELCK), 494 to 516 (NLSAIELDQNRFSGPLPPEIGTC), 518 to 540 (KLQRLHLAANQFSSNLPNEISKL), 542 to 564 (NLVTFNVSSNSLTGPIPSEIANC), 566 to 588 (MLQRLDLSRNSFIGSLPPELGSL), 590 to 613 (QLEILRLSENRFSGNIPFTIGNLT), 614 to 636 (HLTELQMGGNLFSGSIPPQLGLL), 638 to 661 (SLQIAMNLSYNDFSGEIPPEIGNL), 663 to 686 (LLMYLSLNNNHLSGEIPTTFENLS), and 687 to 709 (SLLGCNFSYNNLTGQLPHTQIFQ). Residue N192 is glycosylated (N-linked (GlcNAc...) asparagine). N-linked (GlcNAc...) asparagine glycosylation is present at N275. N-linked (GlcNAc...) asparagine glycosylation occurs at N314. A glycan (N-linked (GlcNAc...) asparagine) is linked at N395. N-linked (GlcNAc...) asparagine glycosylation occurs at N494. A glycan (N-linked (GlcNAc...) asparagine) is linked at N547. A glycan (N-linked (GlcNAc...) asparagine) is linked at N611. 5 N-linked (GlcNAc...) asparagine glycosylation sites follow: N644, N684, N692, N697, and N710. Residues 753–773 (IIIIVSSVIGGISLLLIAIVV) traverse the membrane as a helical segment. Residues 774–1124 (HFLRNPVEPT…CSDLPPPAPP (351 aa)) are Cytoplasmic-facing. T808 and T816 each carry phosphothreonine. The region spanning 819 to 1100 (FHDSYIVGRG…TMREVVLMLI (282 aa)) is the Protein kinase domain. ATP contacts are provided by residues 825-833 (VGRGACGTV) and K847. Residues Y901 and Y939 each carry the phosphotyrosine modification. The active-site Proton acceptor is D952. S986 carries the phosphoserine modification. 2 positions are modified to phosphotyrosine: Y994 and Y1001. Position 1002 is a phosphothreonine (T1002).

Belongs to the protein kinase superfamily. Ser/Thr protein kinase family.

The protein localises to the membrane. It catalyses the reaction L-seryl-[protein] + ATP = O-phospho-L-seryl-[protein] + ADP + H(+). The enzyme catalyses L-threonyl-[protein] + ATP = O-phospho-L-threonyl-[protein] + ADP + H(+). This chain is Probable leucine-rich repeat receptor-like protein kinase At2g33170, found in Arabidopsis thaliana (Mouse-ear cress).